A 243-amino-acid polypeptide reads, in one-letter code: Ubiquinone/menaquinone biosynthesis C-methyltransferase UbiE (243 aa).

Residues T69, D90, and 116–117 each bind S-adenosyl-L-methionine; that span reads DA.

Belongs to the class I-like SAM-binding methyltransferase superfamily. MenG/UbiE family.

The catalysed reaction is a 2-demethylmenaquinol + S-adenosyl-L-methionine = a menaquinol + S-adenosyl-L-homocysteine + H(+). The enzyme catalyses a 2-methoxy-6-(all-trans-polyprenyl)benzene-1,4-diol + S-adenosyl-L-methionine = a 5-methoxy-2-methyl-3-(all-trans-polyprenyl)benzene-1,4-diol + S-adenosyl-L-homocysteine + H(+). It functions in the pathway quinol/quinone metabolism; menaquinone biosynthesis; menaquinol from 1,4-dihydroxy-2-naphthoate: step 2/2. It participates in cofactor biosynthesis; ubiquinone biosynthesis. Methyltransferase required for the conversion of demethylmenaquinol (DMKH2) to menaquinol (MKH2) and the conversion of 2-polyprenyl-6-methoxy-1,4-benzoquinol (DDMQH2) to 2-polyprenyl-3-methyl-6-methoxy-1,4-benzoquinol (DMQH2). This chain is Ubiquinone/menaquinone biosynthesis C-methyltransferase UbiE, found in Paraburkholderia phymatum (strain DSM 17167 / CIP 108236 / LMG 21445 / STM815) (Burkholderia phymatum).